Here is a 59-residue protein sequence, read N- to C-terminus: Small integral membrane protein 30 (59 aa).

A signal peptide spans 1-24 (MNSVSTQLILVLASLLLILPVVEA). Topologically, residues 25 to 29 (VEAGD) are extracellular. A helical membrane pass occupies residues 30–50 (AIALLLGVVLSITGICACLGI). Over 51–59 (YARKRNGQM) the chain is Cytoplasmic.

Interacts (via transmembrane domain) with antiviral protein MAVS (via transmembrane domain); the interaction disrupts MAVS interaction with RIGI and inhibits MAVS aggregation, resulting in the repression of type I interferon signaling and innate immune responses.

The protein localises to the endoplasmic reticulum membrane. The protein resides in the mitochondrion membrane. Negatively regulates antiviral innate immune responses. Disrupts the interaction of antiviral protein MAVS with innate immune receptor RIGI and inhibits MAVS aggregation, resulting in the repression of type I interferon signaling and innate immune responses. The protein is Small integral membrane protein 30 of Mus musculus (Mouse).